The following is a 540-amino-acid chain: 2-isopropylmalate synthase (540 aa).

A Pyruvate carboxyltransferase domain is found at 8-271 (VLIFDTTLRD…NPFFGRESDS (264 aa)). The Mn(2+) site is built by Asp17, His208, His210, and Asn244. Residues 408-540 (QLRLVQVSCG…AVLADRRPGI (133 aa)) are regulatory domain.

This sequence belongs to the alpha-IPM synthase/homocitrate synthase family. LeuA type 1 subfamily. In terms of assembly, homodimer. It depends on Mn(2+) as a cofactor.

The protein localises to the cytoplasm. The enzyme catalyses 3-methyl-2-oxobutanoate + acetyl-CoA + H2O = (2S)-2-isopropylmalate + CoA + H(+). The protein operates within amino-acid biosynthesis; L-leucine biosynthesis; L-leucine from 3-methyl-2-oxobutanoate: step 1/4. In terms of biological role, catalyzes the condensation of the acetyl group of acetyl-CoA with 3-methyl-2-oxobutanoate (2-ketoisovalerate) to form 3-carboxy-3-hydroxy-4-methylpentanoate (2-isopropylmalate). This is 2-isopropylmalate synthase from Prochlorococcus marinus (strain MIT 9303).